A 113-amino-acid polypeptide reads, in one-letter code: Ribulose bisphosphate carboxylase small subunit (113 aa).

Belongs to the RuBisCO small chain family. In terms of assembly, heterohexadecamer of 8 large and 8 small subunits.

Its subcellular location is the carboxysome. RuBisCO catalyzes two reactions: the carboxylation of D-ribulose 1,5-bisphosphate, the primary event in carbon dioxide fixation, as well as the oxidative fragmentation of the pentose substrate in the photorespiration process. Both reactions occur simultaneously and in competition at the same active site. Although the small subunit is not catalytic it is essential for maximal activity. This Synechococcus sp. (strain WH7803) protein is Ribulose bisphosphate carboxylase small subunit.